The following is a 426-amino-acid chain: Mediator of RNA polymerase II transcription subunit 4 (426 aa).

The disordered stretch occupies residues methionine 1–serine 56. Positions glycine 19–proline 28 are enriched in polar residues. Low complexity predominate over residues serine 36 to serine 56. Positions threonine 160 to lysine 212 form a coiled coil. Disordered stretches follow at residues lysine 214–valine 236 and isoleucine 373–aspartate 426. Acidic residues predominate over residues isoleucine 406–aspartate 426.

It belongs to the Mediator complex subunit 4 family. In terms of assembly, component of the Mediator complex.

It localises to the nucleus. In terms of biological role, component of the Mediator complex, a coactivator involved in the regulated transcription of nearly all RNA polymerase II-dependent genes. Mediator functions as a bridge to convey information from gene-specific regulatory proteins to the basal RNA polymerase II transcription machinery. The Mediator complex, having a compact conformation in its free form, is recruited to promoters by direct interactions with regulatory proteins and serves for the assembly of a functional preinitiation complex with RNA polymerase II and the general transcription factors. The protein is Mediator of RNA polymerase II transcription subunit 4 (MED4) of Arabidopsis thaliana (Mouse-ear cress).